Reading from the N-terminus, the 278-residue chain is MADS-box transcription factor PHERES 2 (278 aa).

Residues 1–60 enclose the MADS-box domain; the sequence is MKRKMKLSLIENSVSRKTTFTKRKKGMTKKLTELVTLCGVEACAVVYSPFNSIPEAWPSR.

Interacts with AGL61/DIANA and AGL62. In terms of tissue distribution, male gametophyte, embryo and endosperm.

It localises to the nucleus. Its function is as follows. Probable transcription factor involved in the development of gametophytes and seeds. The sequence is that of MADS-box transcription factor PHERES 2 (PHE2) from Arabidopsis thaliana (Mouse-ear cress).